The chain runs to 428 residues: Glutamate-1-semialdehyde 2,1-aminomutase (428 aa).

Lys265 carries the N6-(pyridoxal phosphate)lysine modification.

Belongs to the class-III pyridoxal-phosphate-dependent aminotransferase family. HemL subfamily. As to quaternary structure, homodimer. It depends on pyridoxal 5'-phosphate as a cofactor.

The protein resides in the cytoplasm. The enzyme catalyses (S)-4-amino-5-oxopentanoate = 5-aminolevulinate. The protein operates within porphyrin-containing compound metabolism; protoporphyrin-IX biosynthesis; 5-aminolevulinate from L-glutamyl-tRNA(Glu): step 2/2. This chain is Glutamate-1-semialdehyde 2,1-aminomutase, found in Shewanella frigidimarina (strain NCIMB 400).